The sequence spans 135 residues: D-ribose pyranase (135 aa).

Catalysis depends on His20, which acts as the Proton donor. Substrate is bound by residues Asp28, His102, and 124 to 126 (YSN).

It belongs to the RbsD / FucU family. RbsD subfamily. As to quaternary structure, homodecamer.

It is found in the cytoplasm. The enzyme catalyses beta-D-ribopyranose = beta-D-ribofuranose. Its pathway is carbohydrate metabolism; D-ribose degradation; D-ribose 5-phosphate from beta-D-ribopyranose: step 1/2. Functionally, catalyzes the interconversion of beta-pyran and beta-furan forms of D-ribose. The protein is D-ribose pyranase of Thermotoga petrophila (strain ATCC BAA-488 / DSM 13995 / JCM 10881 / RKU-1).